The sequence spans 448 residues: 3-phosphoshikimate 1-carboxyvinyltransferase (448 aa).

3-phosphoshikimate-binding residues include Lys28, Ser29, and Arg33. Lys28 contacts phosphoenolpyruvate. Phosphoenolpyruvate-binding residues include Gly100 and Arg128. Positions 173, 175, 326, and 353 each coordinate 3-phosphoshikimate. Position 175 (Gln175) interacts with phosphoenolpyruvate. Asp326 functions as the Proton acceptor in the catalytic mechanism. Positions 357 and 405 each coordinate phosphoenolpyruvate.

This sequence belongs to the EPSP synthase family. In terms of assembly, monomer.

The protein resides in the cytoplasm. It catalyses the reaction 3-phosphoshikimate + phosphoenolpyruvate = 5-O-(1-carboxyvinyl)-3-phosphoshikimate + phosphate. The protein operates within metabolic intermediate biosynthesis; chorismate biosynthesis; chorismate from D-erythrose 4-phosphate and phosphoenolpyruvate: step 6/7. Catalyzes the transfer of the enolpyruvyl moiety of phosphoenolpyruvate (PEP) to the 5-hydroxyl of shikimate-3-phosphate (S3P) to produce enolpyruvyl shikimate-3-phosphate and inorganic phosphate. The polypeptide is 3-phosphoshikimate 1-carboxyvinyltransferase (Sinorhizobium fredii (strain NBRC 101917 / NGR234)).